The sequence spans 268 residues: Undecaprenyl-diphosphatase (268 aa).

The next 7 membrane-spanning stretches (helical) occupy residues 7-27 (IFNAIILGIVEGITEFFPISS), 87-107 (LIYHHIILGNIPIIFIGLCIY), 116-136 (FYSIIYALIFGTILLILTEIS), 146-166 (IETPQILIIGIFQCLALWPGF), 187-207 (VEFSFILSVPIFFGASVLDVI), 210-230 (FYDISINNIPMLFSGFLSAFI), and 247-267 (SLIPFIIYRSILSIIIYLFFM).

The protein belongs to the UppP family.

The protein resides in the cell membrane. It catalyses the reaction di-trans,octa-cis-undecaprenyl diphosphate + H2O = di-trans,octa-cis-undecaprenyl phosphate + phosphate + H(+). In terms of biological role, catalyzes the dephosphorylation of undecaprenyl diphosphate (UPP). Confers resistance to bacitracin. The sequence is that of Undecaprenyl-diphosphatase from Buchnera aphidicola subsp. Baizongia pistaciae (strain Bp).